A 62-amino-acid chain; its full sequence is Rubredoxin-2 (62 aa).

The region spanning 7 to 58 (MWRCQMVNCGYVYDPDRGDKRRKVPAGTKFEDLPEDWRCPVCGAGKKSFRRL) is the Rubredoxin-like domain. Fe cation is bound by residues C10, C15, C45, and C48.

It belongs to the rubredoxin family. Monomer. It depends on Fe(3+) as a cofactor.

Its function is as follows. Rubredoxin is a small nonheme, iron protein lacking acid-labile sulfide. Its single Fe, chelated to 4 Cys, functions as an electron acceptor and may also stabilize the conformation of the molecule. The sequence is that of Rubredoxin-2 (rd2) from Desulfovibrio desulfuricans (strain ATCC 27774 / DSM 6949 / MB).